The primary structure comprises 143 residues: Probable cyclic pyranopterin monophosphate synthase (143 aa).

Substrate contacts are provided by residues 61 to 63 (MCH) and 97 to 98 (ME). The active site involves Asp-112.

The protein belongs to the MoaC family. As to quaternary structure, homohexamer; trimer of dimers.

The enzyme catalyses (8S)-3',8-cyclo-7,8-dihydroguanosine 5'-triphosphate = cyclic pyranopterin phosphate + diphosphate. It functions in the pathway cofactor biosynthesis; molybdopterin biosynthesis. Catalyzes the conversion of (8S)-3',8-cyclo-7,8-dihydroguanosine 5'-triphosphate to cyclic pyranopterin monophosphate (cPMP). This Sulfolobus acidocaldarius (strain ATCC 33909 / DSM 639 / JCM 8929 / NBRC 15157 / NCIMB 11770) protein is Probable cyclic pyranopterin monophosphate synthase.